We begin with the raw amino-acid sequence, 258 residues long: MATVKLSFLQHICKLTGLSRSGRKDELLRRIVDSPIYPTSRVLGIDLGIKNFSYCFASQNEDSKVIIHNWSVENLTEKNGLDIQWTEDFQPSSMADLSIQLFNTLHEKFNPHVILMERQRYRSGIATIPEWTLRVNMLESMLYALHYAEKRNSIEQKIQYPFLLSLSPKSTYSYWASVLNTKASFSKKKSRVQMVKELIDGQKILFENEEALYKWNNGSRVEFKKDDMADSALIASGWMRWQAQLKHYRNFCKQFLKQ.

Residues M1–P35 form the SAP domain. 2 residues coordinate Mg(2+): D46 and D230.

As to quaternary structure, homodimer.

It localises to the mitochondrion. It carries out the reaction Endonucleolytic cleavage at a junction such as a reciprocal single-stranded crossover between two homologous DNA duplexes (Holliday junction).. Capable of resolving Holliday junctions. Specific for 4-way junctions. Seems to be important for the maintenance of mitochondrial DNA. Cleaves fixed junctions at the point of strand exchange. Cleaves after 5'-CT-3' and 5'-TT-3' sequences. The polypeptide is Cruciform cutting endonuclease 1, mitochondrial (cce1) (Schizosaccharomyces pombe (strain 972 / ATCC 24843) (Fission yeast)).